A 63-amino-acid polypeptide reads, in one-letter code: Keratin-associated protein 19-7 (63 aa).

The protein belongs to the KRTAP type 19 family. In terms of assembly, interacts with hair keratins.

In terms of biological role, in the hair cortex, hair keratin intermediate filaments are embedded in an interfilamentous matrix, consisting of hair keratin-associated proteins (KRTAP), which are essential for the formation of a rigid and resistant hair shaft through their extensive disulfide bond cross-linking with abundant cysteine residues of hair keratins. The matrix proteins include the high-sulfur and high-glycine-tyrosine keratins. This Homo sapiens (Human) protein is Keratin-associated protein 19-7 (KRTAP19-7).